The following is a 294-amino-acid chain: N-acetylmuramic acid 6-phosphate etherase (294 aa).

The SIS domain occupies 54–217; the sequence is VIQSFEEEGR…STASMIGVGK (164 aa). E82 functions as the Proton donor in the catalytic mechanism. E113 is an active-site residue.

It belongs to the GCKR-like family. MurNAc-6-P etherase subfamily. In terms of assembly, homodimer.

It carries out the reaction N-acetyl-D-muramate 6-phosphate + H2O = N-acetyl-D-glucosamine 6-phosphate + (R)-lactate. The protein operates within amino-sugar metabolism; N-acetylmuramate degradation. Its function is as follows. Specifically catalyzes the cleavage of the D-lactyl ether substituent of MurNAc 6-phosphate, producing GlcNAc 6-phosphate and D-lactate. The sequence is that of N-acetylmuramic acid 6-phosphate etherase from Bacillus cereus (strain 03BB102).